Here is a 452-residue protein sequence, read N- to C-terminus: MTAPELRVDTFRAPEDAPKEPSAQQPRLPSSPSPAQALASYHHFPTNDQERWWEETGSLFSRFLEAGQYGLPQQYQFMFFFMHHLIPALGPYPQKWRSTISRSGLPIEFSLNFQKGSHRLLRIGFEPVSFLSGSSQDPFNRIPITDLLNRLSKLQLSNFDTPFFQHLLSKFQLSLSEVRQLQKQGSGPDAHPLKSQAAFGFDFNPDGAILVKGYVFPYLKAKAADVPVGTLIAEAVRTIDVERNQFTHAFGLINDYMQESTGYNEYTFLSCDFVETSEQRLKIYGAHTEVTWAKIAEMWTLGGRLIEEPEIIAGLARLKQIWSLLQIGEGSRAFKGGFDYDKSSATDQIASPIIWNYEIHPGSRFPVPKFYLPVHGENDLHVARALAQFWDSLGWPEHACAYPDTLQQLYPDQDISQTTRLQSWISYSYTAKRGVYMSVYYHSQSTYLWEED.

A compositionally biased stretch (basic and acidic residues) spans 1–19 (MTAPELRVDTFRAPEDAPK). A disordered region spans residues 1–38 (MTAPELRVDTFRAPEDAPKEPSAQQPRLPSSPSPAQAL). Residues 21 to 38 (PSAQQPRLPSSPSPAQAL) show a composition bias toward low complexity. Glutamate 108 contributes to the brevianamide F binding site. Dimethylallyl diphosphate is bound by residues arginine 122, lysine 212, tyrosine 214, lysine 282, tyrosine 284, tyrosine 371, tyrosine 436, and tyrosine 440.

Belongs to the tryptophan dimethylallyltransferase family. As to quaternary structure, monomer.

The catalysed reaction is brevianamide F + dimethylallyl diphosphate = deoxybrevianamide E + diphosphate. It functions in the pathway alkaloid biosynthesis. Addition of 5 mM Mg(2+), Ca(2+) or Mn(2+) slightly enhances catalysis (about 100-120%). Significant reduction of enzyme activity (2%-35%) is observed with Cu(2+), Zn(2+), Fe(2+), or Sn(2+) (5 mM). In terms of biological role, deoxybrevianamide E synthase; part of the gene cluster that mediates the biosynthesis of notoamide, a fungal indole alkaloid that belongs to a family of natural products containing a characteristic bicyclo[2.2.2]diazaoctane core. The first step of notoamide biosynthesis involves coupling of L-proline and L-tryptophan by the bimodular NRPS notE, to produce cyclo-L-tryptophan-L-proline called brevianamide F. The reverse prenyltransferase notF then acts as a deoxybrevianamide E synthase and converts brevianamide F to deoxybrevianamide E via reverse prenylation at C-2 of the indole ring leading to the bicyclo[2.2.2]diazaoctane core. Deoxybrevianamide E is further hydroxylated at C-6 of the indole ring, likely catalyzed by the cytochrome P450 monooxygenase notG, to yield 6-hydroxy-deoxybrevianamide E. 6-hydroxy-deoxybrevianamide E is a specific substrate of the prenyltransferase notC for normal prenylation at C-7 to produce 6-hydroxy-7-prenyl-deoxybrevianamide, also called notoamide S. As the proposed pivotal branching point in notoamide biosynthesis, notoamide S can be diverted to notoamide E through an oxidative pyran ring closure putatively catalyzed by either notH cytochrome P450 monooxygenase or the notD FAD-linked oxidoreductase. This step would be followed by an indole 2,3-epoxidation-initiated pinacol-like rearrangement catalyzed by the notB FAD-dependent monooxygenase leading to the formation of notoamide C and notoamide D. On the other hand notoamide S is converted to notoamide T by notH (or notD), a bifunctional oxidase that also functions as the intramolecular Diels-Alderase responsible for generation of (+)-notoamide T. To generate antipodal (-)-notoaminide T, notH' (or notD') in Aspergillus versicolor is expected to catalyze a Diels-Alder reaction leading to the opposite stereochemistry. The remaining oxidoreductase notD (or notH) likely catalyzes the oxidative pyran ring formation to yield (+)-stephacidin A. The FAD-dependent monooxygenase notI is highly similar to notB and is predicted to catalyze a similar conversion from (+)-stephacidin A to (-)-notoamide B via the 2,3-epoxidation of (+)-stephacidin A followed by a pinacol-type rearrangement. Finally, it remains unclear which enzyme could be responsible for the final hydroxylation steps leading to notoamide A and sclerotiamide. This is Deoxybrevianamide E synthase notF from Aspergillus sp. (strain MF297-2).